A 475-amino-acid polypeptide reads, in one-letter code: Ribulose bisphosphate carboxylase large chain (475 aa).

An N6,N6,N6-trimethyllysine modification is found at lysine 14. Substrate contacts are provided by asparagine 123 and threonine 173. Lysine 175 functions as the Proton acceptor in the catalytic mechanism. Residue lysine 177 participates in substrate binding. Mg(2+)-binding residues include lysine 201, aspartate 203, and glutamate 204. Lysine 201 is modified (N6-carboxylysine). Histidine 294 functions as the Proton acceptor in the catalytic mechanism. Residues arginine 295, histidine 327, and serine 379 each contribute to the substrate site.

The protein belongs to the RuBisCO large chain family. Type I subfamily. In terms of assembly, heterohexadecamer of 8 large chains and 8 small chains; disulfide-linked. The disulfide link is formed within the large subunit homodimers. It depends on Mg(2+) as a cofactor. Post-translationally, the disulfide bond which can form in the large chain dimeric partners within the hexadecamer appears to be associated with oxidative stress and protein turnover.

It is found in the plastid. It localises to the chloroplast. The enzyme catalyses 2 (2R)-3-phosphoglycerate + 2 H(+) = D-ribulose 1,5-bisphosphate + CO2 + H2O. The catalysed reaction is D-ribulose 1,5-bisphosphate + O2 = 2-phosphoglycolate + (2R)-3-phosphoglycerate + 2 H(+). Functionally, ruBisCO catalyzes two reactions: the carboxylation of D-ribulose 1,5-bisphosphate, the primary event in carbon dioxide fixation, as well as the oxidative fragmentation of the pentose substrate in the photorespiration process. Both reactions occur simultaneously and in competition at the same active site. The polypeptide is Ribulose bisphosphate carboxylase large chain (Actinidia chinensis (Kiwi)).